The chain runs to 295 residues: Ribosomal RNA small subunit methyltransferase A (295 aa).

Positions 29, 31, 56, 77, 102, and 127 each coordinate S-adenosyl-L-methionine.

This sequence belongs to the class I-like SAM-binding methyltransferase superfamily. rRNA adenine N(6)-methyltransferase family. RsmA subfamily.

The protein localises to the cytoplasm. It carries out the reaction adenosine(1518)/adenosine(1519) in 16S rRNA + 4 S-adenosyl-L-methionine = N(6)-dimethyladenosine(1518)/N(6)-dimethyladenosine(1519) in 16S rRNA + 4 S-adenosyl-L-homocysteine + 4 H(+). Specifically dimethylates two adjacent adenosines (A1518 and A1519) in the loop of a conserved hairpin near the 3'-end of 16S rRNA in the 30S particle. May play a critical role in biogenesis of 30S subunits. This is Ribosomal RNA small subunit methyltransferase A from Anoxybacillus flavithermus (strain DSM 21510 / WK1).